A 1129-amino-acid chain; its full sequence is Regulator of nonsense transcripts 1 (1129 aa).

A sufficient for interaction with RENT2 region spans residues 1–415 (MSVEAYGPSS…LRSSVGAPVE (415 aa)). Residues Ser10 and Ser31 each carry the phosphoserine modification. The segment at 39-70 (TLPSQTQTPPGGPGGPGGGGAGGPGGAGAGAA) is disordered. The segment covering 52–69 (GGPGGGGAGGPGGAGAGA) has biased composition (gly residues). The Upf1 CH-rich domain maps to 115–272 (TKDLPIHACS…NKLEELWKEN (158 aa)). Zn(2+) contacts are provided by Cys123, Cys126, Cys137, Ser140, Cys145, His155, His159, Cys165, Cys183, Cys186, Cys209, and Cys213. The C3H stretch occupies residues 123–155 (CSYCGIHDPACVVYCNTSKKWFCNGRGNTSGSH). Positions 137–165 (CNTSKKWFCNGRGNTSGSHIVNHLVRAKC) are CC/SHH/C. Positions 183–213 (CYNCGCRNVFLLGFIPAKADSVVVLLCRQPC) are C4. ATP contacts are provided by residues Gln486 and 506–510 (GTGKT). Phosphoserine is present on Ser565. ATP is bound by residues Gln676, Tyr713, and Glu844. A Phosphoserine modification is found at Ser956. Disordered stretches follow at residues 1009 to 1058 (FGQA…VASQ) and 1073 to 1096 (SQPS…YLGD). Arg1019 carries the post-translational modification Omega-N-methylarginine. Residues 1025–1034 (KTGRGGRQKN) show a composition bias toward basic residues. Polar residues predominate over residues 1041 to 1058 (PSQTNLPNSQASQDVASQ). Residues 1073–1086 (SQPSQMSQPGLSQP) are compositionally biased toward low complexity. Ser1089, Ser1107, Ser1110, and Ser1127 each carry phosphoserine. 2 short sequence motifs ([ST]-Q motif) span residues 1089–1090 (SQ) and 1107–1108 (SQ). The disordered stretch occupies residues 1110-1129 (STYQGERAYQHGGVTGLSQY).

This sequence belongs to the DNA2/NAM7 helicase family. In terms of assembly, found in a post-splicing messenger ribonucleoprotein (mRNP) complex. Associates with the exon junction complex (EJC). Associates with the SGM1C complex; is phosphorylated by the complex kinase component SGM1. Part of a complex composed of SMG1, DHX34 and UPF1; within the complex DHX34 acts as a scaffolding protein to facilitate SMG1 phosphorylation of UPF1. Interacts with UPF2. Interacts with UPF3A and UPF3B. Interacts with EST1A. Interacts with SLBP. Interacts (when hyperphosphorylated) with PNRC2. Interacts with AGO1 and AGO2. Interacts with GSPT2. Interacts with isoform 1 and isoform 5 of ADAR/ADAR1. Interacts with SMG7. Interacts with ZC3H12A; this interaction occurs in a mRNA translationally active- and termination-dependent manner and is essential for ZC3H12A-mediated degradation of target mRNAs. Interacts with CPSF6. Interacts with MOV10; the interaction is direct and RNA-dependent. Interacts with SHFL; the interaction increases in the presence of RNA. Interacts with UPF2 and DDX4; interactions are mediated by TDRD6. Interacts with DHX34 and PABPC1/PABP1; the interactions are RNA-independent. Interacts with RBM46. As to quaternary structure, (Microbial infection) Interacts with human T-cell leukemia virus 1/HTLV-1 protein Tax; this interaction inhibits the host nonsense-mediated mRNA decay (NMD). Phosphorylated by SMG1; required for formation of mRNA surveillance complexes. Ubiquitous.

The protein resides in the cytoplasm. The protein localises to the P-body. It localises to the nucleus. Its subcellular location is the perinuclear region. It catalyses the reaction ATP + H2O = ADP + phosphate + H(+). Functionally, RNA-dependent helicase required for nonsense-mediated decay (NMD) of aberrant mRNAs containing premature stop codons and modulates the expression level of normal mRNAs. Is recruited to mRNAs upon translation termination and undergoes a cycle of phosphorylation and dephosphorylation; its phosphorylation appears to be a key step in NMD. Recruited by release factors to stalled ribosomes together with the SMG1C protein kinase complex to form the transient SURF (SMG1-UPF1-eRF1-eRF3) complex. In EJC-dependent NMD, the SURF complex associates with the exon junction complex (EJC) (located 50-55 or more nucleotides downstream from the termination codon) through UPF2 and allows the formation of an UPF1-UPF2-UPF3 surveillance complex which is believed to activate NMD. Phosphorylated UPF1 is recognized by EST1B/SMG5, SMG6 and SMG7 which are thought to provide a link to the mRNA degradation machinery involving exonucleolytic and endonucleolytic pathways, and to serve as adapters to protein phosphatase 2A (PP2A), thereby triggering UPF1 dephosphorylation and allowing the recycling of NMD factors. UPF1 can also activate NMD without UPF2 or UPF3, and in the absence of the NMD-enhancing downstream EJC indicative for alternative NMD pathways. Plays a role in replication-dependent histone mRNA degradation at the end of phase S; the function is independent of UPF2. For the recognition of premature termination codons (PTC) and initiation of NMD a competitive interaction between UPF1 and PABPC1 with the ribosome-bound release factors is proposed. The ATPase activity of UPF1 is required for disassembly of mRNPs undergoing NMD. Together with UPF2 and dependent on TDRD6, mediates the degradation of mRNA harboring long 3'UTR by inducing the NMD machinery. Also capable of unwinding double-stranded DNA and translocating on single-stranded DNA. This Homo sapiens (Human) protein is Regulator of nonsense transcripts 1.